A 316-amino-acid polypeptide reads, in one-letter code: Probable 5-dehydro-4-deoxyglucarate dehydratase (316 aa).

It belongs to the DapA family.

It catalyses the reaction 5-dehydro-4-deoxy-D-glucarate + H(+) = 2,5-dioxopentanoate + CO2 + H2O. It participates in carbohydrate acid metabolism; D-glucarate degradation; 2,5-dioxopentanoate from D-glucarate: step 2/2. This is Probable 5-dehydro-4-deoxyglucarate dehydratase from Corynebacterium glutamicum (strain R).